A 570-amino-acid chain; its full sequence is Proline--tRNA ligase (570 aa).

The protein belongs to the class-II aminoacyl-tRNA synthetase family. ProS type 1 subfamily. As to quaternary structure, homodimer.

The protein localises to the cytoplasm. It catalyses the reaction tRNA(Pro) + L-proline + ATP = L-prolyl-tRNA(Pro) + AMP + diphosphate. Functionally, catalyzes the attachment of proline to tRNA(Pro) in a two-step reaction: proline is first activated by ATP to form Pro-AMP and then transferred to the acceptor end of tRNA(Pro). As ProRS can inadvertently accommodate and process non-cognate amino acids such as alanine and cysteine, to avoid such errors it has two additional distinct editing activities against alanine. One activity is designated as 'pretransfer' editing and involves the tRNA(Pro)-independent hydrolysis of activated Ala-AMP. The other activity is designated 'posttransfer' editing and involves deacylation of mischarged Ala-tRNA(Pro). The misacylated Cys-tRNA(Pro) is not edited by ProRS. The protein is Proline--tRNA ligase of Thermoanaerobacter pseudethanolicus (strain ATCC 33223 / 39E) (Clostridium thermohydrosulfuricum).